Here is an 881-residue protein sequence, read N- to C-terminus: MKRSISVDSSSPKNVFNPETPNGFDDSVYLNFTSMHSIQPILSRIRELAAITIPKERVPRLCWFKQLLELQAPPEMQRNELPFSVYLISGNAGSGKSTCIQTLNEAIDCIITGSTRVAAQNVHAKLSTAYASRPINTIFHEFGFRGNHIQAQLGRYAYNWTTTPPSIEDLQKRDIVYYWEVLIDITKRVFQMGDDGRGGTSTFKTLWAIERLLNKPTGSMSGTAFIACGSLPAFTRSNVIVIDEAGLLGRHILTAVVYCWWLLNAIYQSPQYINGRKPVIVCVGSPTQTDSLESHFQHDMQRSHVTPSENILTYIICNQTLRQYTNISHNWAIFINNKRCQEDDFGNLLKTLEYGLPITEAHARLVDTFVVPASYINNPANLPGWTRLYSSHKEVSAYMSKLHAHLKLSKNDHFSVFALPTYTFIRLTAFDEYRKLTGQPGLSVEHWIRANSGRLHNYSQSRDHDMGTVKYETHSNRDLIVARTDITYVLNSLVVVTTRLRKLVIGFSGTFQSFAKVLRDDSFVKARGETSIEYAYRFLSNLIFGGLINFYNFLLNKNLHPDKVSLAYKRLAALTLELLSGTNKAPLHEAAVNGAGAGIDCDGAATSADKAFCFTKAPESKVTASIPEDPDDVIFTALNDEVIDLVYCQYEFSYPKSSNEVHAQFLLMKAIYDGRYAILAELFESSFTTAPFSAYVDNVNFNGSELLIGNVRGGLLSLALQTDTYTLLGYTFAPVPVFVEELTRKKLYRETTEMLYALHVPLMVLQDQHGFVSIVNANVCEFTESIEDAELAMATTVDYGLSSKLAMTIARSQGLSLEKVAICFTADKLRLNSVYVAMSRTVSSRFLKMNLNPLRERYEKSAEISDHILAALRDPNVHVVY.

Residue 90 to 97 coordinates ATP; the sequence is GNAGSGKS.

Belongs to the herpesviridae helicase family. Associates with the primase and the primase-associated factor to form the helicase-primase complex.

The protein resides in the host nucleus. In terms of biological role, component of the helicase/primase complex. Unwinds the DNA at the replication forks and generates single-stranded DNA for both leading and lagging strand synthesis. The primase synthesizes short RNA primers on the lagging strand that the polymerase elongates using dNTPs. Possesses helicase-like motifs and therefore may act as the helicase subunit of the complex. The sequence is that of DNA replication helicase from Homo sapiens (Human).